We begin with the raw amino-acid sequence, 156 residues long: Small ribosomal subunit protein uS7 (156 aa).

It belongs to the universal ribosomal protein uS7 family. As to quaternary structure, part of the 30S ribosomal subunit. Contacts proteins S9 and S11.

One of the primary rRNA binding proteins, it binds directly to 16S rRNA where it nucleates assembly of the head domain of the 30S subunit. Is located at the subunit interface close to the decoding center, probably blocks exit of the E-site tRNA. This Thermosynechococcus vestitus (strain NIES-2133 / IAM M-273 / BP-1) protein is Small ribosomal subunit protein uS7.